The sequence spans 293 residues: tRNA pseudouridine synthase B (293 aa).

Aspartate 39 (nucleophile) is an active-site residue.

This sequence belongs to the pseudouridine synthase TruB family. Type 1 subfamily.

It catalyses the reaction uridine(55) in tRNA = pseudouridine(55) in tRNA. In terms of biological role, responsible for synthesis of pseudouridine from uracil-55 in the psi GC loop of transfer RNAs. This Rickettsia bellii (strain RML369-C) protein is tRNA pseudouridine synthase B.